The chain runs to 293 residues: Probable endonuclease 4 (293 aa).

His78, His118, Glu154, Asp188, His191, His225, Asp238, His240, and Glu270 together coordinate Zn(2+).

It belongs to the AP endonuclease 2 family. Requires Zn(2+) as cofactor.

The enzyme catalyses Endonucleolytic cleavage to 5'-phosphooligonucleotide end-products.. Functionally, endonuclease IV plays a role in DNA repair. It cleaves phosphodiester bonds at apurinic or apyrimidinic (AP) sites, generating a 3'-hydroxyl group and a 5'-terminal sugar phosphate. This is Probable endonuclease 4 from Vibrio vulnificus (strain YJ016).